We begin with the raw amino-acid sequence, 146 residues long: Large ribosomal subunit protein uL23m (146 aa).

A disordered region spans residues 108 to 146 (PDLFPEKEPTSPDPLEEELPQQRQSSDPRCPGIPSWFGL).

Belongs to the universal ribosomal protein uL23 family. In terms of assembly, component of the mitochondrial ribosome large subunit (39S) which comprises a 16S rRNA and about 50 distinct proteins.

The protein localises to the mitochondrion. This chain is Large ribosomal subunit protein uL23m (Mrpl23), found in Rattus norvegicus (Rat).